The sequence spans 109 residues: RYamide neuropeptides (109 aa).

The N-terminal stretch at 1-22 is a signal peptide; sequence MNECVNKLLHLKFLFYFILGIQ. Residue tyrosine 33 is modified to Tyrosine amide. The propeptide occupies 36-53; it reads STTYDESLKSRRIFIVPR. Tyrosine 63 is subject to Tyrosine amide. Positions 67–109 are excised as a propeptide; sequence SGKYLCLSREINKLIVRKRLRNNDKERTPTLSFITKHFLMRNT.

It is found in the secreted. Functionally, neuropeptides RYamide-1 and RYamide-2 are ligands for the G-protein coupled receptor RYa-R. May suppress feeding behavior. The protein is RYamide neuropeptides of Drosophila melanogaster (Fruit fly).